We begin with the raw amino-acid sequence, 476 residues long: Bifunctional protein HldE (476 aa).

The segment at 1 to 319 (MKVSLPAFEK…EALALHHGES (319 aa)) is ribokinase. 195–198 (NMSE) contacts ATP. D264 is an active-site residue. A cytidylyltransferase region spans residues 345-476 (MTNGCFDILH…AIIQNIMAKQ (132 aa)).

In the N-terminal section; belongs to the carbohydrate kinase PfkB family. The protein in the C-terminal section; belongs to the cytidylyltransferase family. In terms of assembly, homodimer.

The catalysed reaction is D-glycero-beta-D-manno-heptose 7-phosphate + ATP = D-glycero-beta-D-manno-heptose 1,7-bisphosphate + ADP + H(+). The enzyme catalyses D-glycero-beta-D-manno-heptose 1-phosphate + ATP + H(+) = ADP-D-glycero-beta-D-manno-heptose + diphosphate. It participates in nucleotide-sugar biosynthesis; ADP-L-glycero-beta-D-manno-heptose biosynthesis; ADP-L-glycero-beta-D-manno-heptose from D-glycero-beta-D-manno-heptose 7-phosphate: step 1/4. Its pathway is nucleotide-sugar biosynthesis; ADP-L-glycero-beta-D-manno-heptose biosynthesis; ADP-L-glycero-beta-D-manno-heptose from D-glycero-beta-D-manno-heptose 7-phosphate: step 3/4. Its function is as follows. Catalyzes the phosphorylation of D-glycero-D-manno-heptose 7-phosphate at the C-1 position to selectively form D-glycero-beta-D-manno-heptose-1,7-bisphosphate. In terms of biological role, catalyzes the ADP transfer from ATP to D-glycero-beta-D-manno-heptose 1-phosphate, yielding ADP-D-glycero-beta-D-manno-heptose. In Shewanella sp. (strain ANA-3), this protein is Bifunctional protein HldE.